Here is a 220-residue protein sequence, read N- to C-terminus: Aspartic protease inhibitor 8 (220 aa).

A signal peptide spans 1 to 23 (MMKCLFLLCLCLLPIVVFSSTFT). Positions 24-32 (SQNLIDLPS) are excised as a propeptide. 2 disulfides stabilise this stretch: C80-C125 and C174-C185.

Belongs to the protease inhibitor I3 (leguminous Kunitz-type inhibitor) family.

The protein localises to the vacuole. Functionally, inhibitor of cathepsin D (aspartic protease) and trypsin (serine protease). May protect the plant by inhibiting proteases of invading organisms. This Solanum tuberosum (Potato) protein is Aspartic protease inhibitor 8.